We begin with the raw amino-acid sequence, 327 residues long: DNA-directed RNA polymerase subunit alpha (327 aa).

Positions Met1–Gln233 are alpha N-terminal domain (alpha-NTD). The tract at residues Val247–Pro327 is alpha C-terminal domain (alpha-CTD).

It belongs to the RNA polymerase alpha chain family. In terms of assembly, homodimer. The RNAP catalytic core consists of 2 alpha, 1 beta, 1 beta' and 1 omega subunit. When a sigma factor is associated with the core the holoenzyme is formed, which can initiate transcription.

It carries out the reaction RNA(n) + a ribonucleoside 5'-triphosphate = RNA(n+1) + diphosphate. In terms of biological role, DNA-dependent RNA polymerase catalyzes the transcription of DNA into RNA using the four ribonucleoside triphosphates as substrates. This is DNA-directed RNA polymerase subunit alpha from Laribacter hongkongensis (strain HLHK9).